The following is a 159-amino-acid chain: Phosphopantetheine adenylyltransferase (159 aa).

T10 lines the substrate pocket. ATP is bound by residues 10-11 and H18; that span reads TF. Residues K42, L74, and R88 each contribute to the substrate site. ATP-binding positions include 89 to 91, E99, and 124 to 130; these read GLR and YAFISSS.

It belongs to the bacterial CoaD family. As to quaternary structure, homohexamer. It depends on Mg(2+) as a cofactor.

The protein localises to the cytoplasm. It catalyses the reaction (R)-4'-phosphopantetheine + ATP + H(+) = 3'-dephospho-CoA + diphosphate. The protein operates within cofactor biosynthesis; coenzyme A biosynthesis; CoA from (R)-pantothenate: step 4/5. In terms of biological role, reversibly transfers an adenylyl group from ATP to 4'-phosphopantetheine, yielding dephospho-CoA (dPCoA) and pyrophosphate. The sequence is that of Phosphopantetheine adenylyltransferase from Hydrogenovibrio crunogenus (strain DSM 25203 / XCL-2) (Thiomicrospira crunogena).